The chain runs to 353 residues: Protein O-mannose kinase (353 aa).

Residues 1 to 19 lie on the Cytoplasmic side of the membrane; it reads MEKKAHFVKRDFPPREAPS. Residues 20–40 form a helical; Signal-anchor for type II membrane protein membrane-spanning segment; it reads LLLLLLVVAVLLLNALLYLYL. Residues 41 to 353 are Lumenal-facing; the sequence is GNLHGSSGRA…AAMPSTREML (313 aa). Positions 83-353 constitute a Protein kinase domain; the sequence is VRKLKCVGEG…AAMPSTREML (271 aa). N-linked (GlcNAc...) asparagine glycosylation is found at N163 and N237.

It belongs to the protein kinase superfamily. Ser/Thr protein kinase family. STKL subfamily.

It is found in the endoplasmic reticulum membrane. The enzyme catalyses 3-O-[beta-D-GalNAc-(1-&gt;3)-beta-D-GlcNAc-(1-&gt;4)-alpha-D-Man]-L-Thr-[protein] + ATP = 3-O-[beta-D-GalNAc-(1-&gt;3)-beta-D-GlcNAc-(1-&gt;4)-(O-6-P-alpha-D-Man)]-Thr-[protein] + ADP + H(+). In terms of biological role, protein O-mannose kinase that specifically mediates phosphorylation at the 6-position of an O-mannose of the trisaccharide (N-acetylgalactosamine (GalNAc)-beta-1,3-N-acetylglucosamine (GlcNAc)-beta-1,4-mannose) to generate phosphorylated O-mannosyl trisaccharide (N-acetylgalactosamine-beta-1,3-N-acetylglucosamine-beta-1,4-(phosphate-6-)mannose). Phosphorylated O-mannosyl trisaccharide is a carbohydrate structure present in alpha-dystroglycan (DAG1), which is required for binding laminin G-like domain-containing extracellular proteins with high affinity. Only shows kinase activity when the GalNAc-beta-3-GlcNAc-beta-terminus is linked to the 4-position of O-mannose, suggesting that this disaccharide serves as the substrate recognition motif. The polypeptide is Protein O-mannose kinase (POMK) (Gallus gallus (Chicken)).